The chain runs to 453 residues: Crh-like protein CRH11 (453 aa).

The first 21 residues, 1 to 21, serve as a signal peptide directing secretion; the sequence is MKFTTLATIASTLLFAANANA. A disulfide bridge links C24 with C32. One can recognise a GH16 domain in the interval 28 to 227; the sequence is KSSDCSPVPA…WAGGITDYSQ (200 aa). E119 serves as the catalytic Nucleophile. Residue E123 is the Proton donor of the active site. Residues E123, W204, and T215 each contribute to the chitin site. Disordered stretches follow at residues 281–343, 362–397, and 410–430; these read LESG…SEKS, KTTV…PASA, and GDAA…TENN. Low complexity-rich tracts occupy residues 286–343, 363–397, and 412–425; these read SVDS…SEKS, TTVT…PASA, and AAPS…PSVS. N-linked (GlcNAc...) asparagine glycosylation is present at N290. Residue N430 is the site of GPI-anchor amidated asparagine attachment. Positions 431–453 are cleaved as a propeptide — removed in mature form; sequence GAVSVAKTTSLFGFVALIGFLFV.

Belongs to the glycosyl hydrolase 16 family. CRH1 subfamily. Post-translationally, the GPI-anchor is attached to the protein in the endoplasmic reticulum and serves to target the protein to the cell surface. There, the glucosamine-inositol phospholipid moiety is cleaved off and the GPI-modified mannoprotein is covalently attached via its lipidless GPI glycan remnant to the 1,6-beta-glucan of the outer cell wall layer.

Its subcellular location is the secreted. It localises to the cell wall. The protein localises to the membrane. The enzyme catalyses Random endo-hydrolysis of N-acetyl-beta-D-glucosaminide (1-&gt;4)-beta-linkages in chitin and chitodextrins.. In terms of biological role, dual chitinase/transglycosylase that plays a role in cell wall architecture. Chitinase and transglycosylase activities are coupled. Required for the polysaccharide cross-linking at the septa and the cell wall. More specifically, transfers chitin to 1,6-beta-glucan in the cell wall. Plays an important role in fungal pathogenesis via its functions in cell wall assembly and regeneration, filamentation, and adherence to host cells. The sequence is that of Crh-like protein CRH11 (CRH11) from Candida albicans (strain SC5314 / ATCC MYA-2876) (Yeast).